A 539-amino-acid chain; its full sequence is Chaperonin GroEL (539 aa).

Residues 29 to 32 (TLGP), 86 to 90 (DGTTT), G413, 479 to 481 (DAL), and D495 each bind ATP.

This sequence belongs to the chaperonin (HSP60) family. As to quaternary structure, forms a cylinder of 14 subunits composed of two heptameric rings stacked back-to-back. Interacts with the co-chaperonin GroES.

The protein resides in the cytoplasm. It carries out the reaction ATP + H2O + a folded polypeptide = ADP + phosphate + an unfolded polypeptide.. Functionally, together with its co-chaperonin GroES, plays an essential role in assisting protein folding. The GroEL-GroES system forms a nano-cage that allows encapsulation of the non-native substrate proteins and provides a physical environment optimized to promote and accelerate protein folding. This is Chaperonin GroEL from Pseudothermotoga lettingae (strain ATCC BAA-301 / DSM 14385 / NBRC 107922 / TMO) (Thermotoga lettingae).